We begin with the raw amino-acid sequence, 124 residues long: Orexigenic neuropeptide QRFP (124 aa).

The N-terminal stretch at 1–17 (MRCLCSWLCLLLPLSAC) is a signal peptide. Residues 18 to 79 (FPLLDRRGPT…REHTGFRLGR (62 aa)) constitute a propeptide that is removed on maturation. Residues 63-100 (KEQQASRREHTGFRLGRQDSGSEATGFLPTDSEKASGP) form a disordered region. Q80 bears the Pyrrolidone carboxylic acid mark. F122 is subject to Phenylalanine amide.

This sequence belongs to the RFamide neuropeptide family. Ligand for the G-protein coupled receptor QRFPR/GPR103. In terms of tissue distribution, expressed in the brain with highest expression levels in the hypothalamus and optic nerve. Also expressed in the trachea and mammary gland.

The protein resides in the secreted. Functionally, stimulates feeding and grooming behavior, metabolic rate and locomotor activity and increases blood pressure. May have orexigenic activity. May promote aldosterone secretion by the adrenal gland. This is Orexigenic neuropeptide QRFP (Qrfp) from Rattus norvegicus (Rat).